We begin with the raw amino-acid sequence, 454 residues long: MAAKPGIPKGTRDFSPVEMAKRNYIFNTIRDVYHLYGFQQIETPSMEMLSTLMGKYGEEGDKLLFKIQNSGNYFSGITDEELLSRNAAKLASKFCEKGLRYDLTVPFARYVVMHRDEITFPFKRYQIQPVWRADRPQKGRYREFYQCDADVVGSDSLLNEVELMQIVDTVFTRFGIRVCIKINNRKILTGIAEIIGEADKIVDITVAIDKLDKIGLDNVNKELAEKGISGEAIAKLQPIILLSGTNAEKLATLKTVLSDSETGLKGVEESEFILNTLQTMGLKNEIELDLTLARGLNYYTGAIFEVKALDVQIGSITGGGRYDNLTGVFGMAGVSGVGISFGADRIFDVLNQLELYPKEAVNGTQLLFINFGEKEAAFSMGILSKARAAGIRAEIFPDAAKMKKQMSYANVKNIPFVAIVGENEMNEGKAMLKNMESGEQQLVTAEELIGALTK.

This sequence belongs to the class-II aminoacyl-tRNA synthetase family. In terms of assembly, homodimer.

The protein localises to the cytoplasm. The catalysed reaction is tRNA(His) + L-histidine + ATP = L-histidyl-tRNA(His) + AMP + diphosphate + H(+). This Bacteroides fragilis (strain ATCC 25285 / DSM 2151 / CCUG 4856 / JCM 11019 / LMG 10263 / NCTC 9343 / Onslow / VPI 2553 / EN-2) protein is Histidine--tRNA ligase.